The following is a 466-amino-acid chain: Cysteine--tRNA ligase (466 aa).

Position 28 (Cys-28) interacts with Zn(2+). The 'HIGH' region signature appears at 30 to 40 (PTVYNYIHIGN). Positions 208, 233, and 237 each coordinate Zn(2+). Positions 265 to 269 (KMSKS) match the 'KMSKS' region motif. ATP is bound at residue Lys-268.

Belongs to the class-I aminoacyl-tRNA synthetase family. In terms of assembly, monomer. Zn(2+) is required as a cofactor.

The protein resides in the cytoplasm. It catalyses the reaction tRNA(Cys) + L-cysteine + ATP = L-cysteinyl-tRNA(Cys) + AMP + diphosphate. The chain is Cysteine--tRNA ligase from Staphylococcus aureus (strain Mu3 / ATCC 700698).